The following is a 159-amino-acid chain: 6,7-dimethyl-8-ribityllumazine synthase (159 aa).

5-amino-6-(D-ribitylamino)uracil contacts are provided by residues W26, 58–60 (AIE), and 80–82 (VVI). 85-86 (ET) is a (2S)-2-hydroxy-3-oxobutyl phosphate binding site. H88 (proton donor) is an active-site residue. N113 is a binding site for 5-amino-6-(D-ribitylamino)uracil. (2S)-2-hydroxy-3-oxobutyl phosphate is bound at residue R127.

Belongs to the DMRL synthase family. In terms of assembly, homopentamer.

The enzyme catalyses (2S)-2-hydroxy-3-oxobutyl phosphate + 5-amino-6-(D-ribitylamino)uracil = 6,7-dimethyl-8-(1-D-ribityl)lumazine + phosphate + 2 H2O + H(+). The protein operates within cofactor biosynthesis; riboflavin biosynthesis; riboflavin from 2-hydroxy-3-oxobutyl phosphate and 5-amino-6-(D-ribitylamino)uracil: step 1/2. In terms of biological role, catalyzes the formation of 6,7-dimethyl-8-ribityllumazine by condensation of 5-amino-6-(D-ribitylamino)uracil with 3,4-dihydroxy-2-butanone 4-phosphate. This is the penultimate step in the biosynthesis of riboflavin. The polypeptide is 6,7-dimethyl-8-ribityllumazine synthase (Mycolicibacterium gilvum (strain PYR-GCK) (Mycobacterium gilvum (strain PYR-GCK))).